Reading from the N-terminus, the 429-residue chain is Adenylosuccinate synthetase (429 aa).

Residues 13-19 and 41-43 contribute to the GTP site; these read GDEGKGK and GHT. D14 acts as the Proton acceptor in catalysis. Residues D14 and G41 each contribute to the Mg(2+) site. IMP is bound by residues 14 to 17, 39 to 42, T130, R144, Q224, T239, and R303; these read DEGK and NAGH. H42 functions as the Proton donor in the catalytic mechanism. Residue 299-305 coordinates substrate; it reads ATTGRAR. Residues R305, 331–333, and 412–414 each bind GTP; these read KLD and STG.

It belongs to the adenylosuccinate synthetase family. In terms of assembly, homodimer. It depends on Mg(2+) as a cofactor.

The protein resides in the cytoplasm. It catalyses the reaction IMP + L-aspartate + GTP = N(6)-(1,2-dicarboxyethyl)-AMP + GDP + phosphate + 2 H(+). It participates in purine metabolism; AMP biosynthesis via de novo pathway; AMP from IMP: step 1/2. Functionally, plays an important role in the de novo pathway of purine nucleotide biosynthesis. Catalyzes the first committed step in the biosynthesis of AMP from IMP. The polypeptide is Adenylosuccinate synthetase (Psychrobacter sp. (strain PRwf-1)).